The chain runs to 774 residues: C6 finger domain transcription factor nscR (774 aa).

Positions 17–43 (CELCRERKIKCDKVDPCNNCVSAGVVC) form a DNA-binding region, zn(2)-C6 fungal-type. Disordered regions lie at residues 61–94 (RPMS…SGAV), 536–559 (LQLP…PQEH), and 665–697 (PTFS…SDLS). The segment covering 67–78 (FVPPRAPTPVAG) has biased composition (pro residues). Positions 536-548 (LQLPQPSNGSSQP) are enriched in low complexity. A compositionally biased stretch (polar residues) spans 665–674 (PTFSLGSSTG). Low complexity predominate over residues 675–697 (TSAAPTPRSRASSTPSDTLSDLS).

It is found in the nucleus. In terms of biological role, transcription factor that specifically regulates the neosartoricin biosynthesis gene cluster. The chain is C6 finger domain transcription factor nscR from Aspergillus fumigatus (strain ATCC MYA-4609 / CBS 101355 / FGSC A1100 / Af293) (Neosartorya fumigata).